The following is a 401-amino-acid chain: NADH-quinone oxidoreductase subunit D (401 aa).

Belongs to the complex I 49 kDa subunit family. In terms of assembly, NDH-1 is composed of 15 different subunits. Subunits NuoB, C, D, E, F, and G constitute the peripheral sector of the complex.

It is found in the cell membrane. The catalysed reaction is a quinone + NADH + 5 H(+)(in) = a quinol + NAD(+) + 4 H(+)(out). In terms of biological role, NDH-1 shuttles electrons from NADH, via FMN and iron-sulfur (Fe-S) centers, to quinones in the respiratory chain. The immediate electron acceptor for the enzyme in this species is believed to be a menaquinone. Couples the redox reaction to proton translocation (for every two electrons transferred, four hydrogen ions are translocated across the cytoplasmic membrane), and thus conserves the redox energy in a proton gradient. The protein is NADH-quinone oxidoreductase subunit D of Deinococcus radiodurans (strain ATCC 13939 / DSM 20539 / JCM 16871 / CCUG 27074 / LMG 4051 / NBRC 15346 / NCIMB 9279 / VKM B-1422 / R1).